Here is a 251-residue protein sequence, read N- to C-terminus: NADPH-dependent oxidoreductase (251 aa).

Belongs to the flavin oxidoreductase frp family. FMN is required as a cofactor.

Functionally, reduces FMN, organic nitro compounds and disulfide DTNB. Involved in maintenance of the cellular redox state and the disulfide stress response. This is NADPH-dependent oxidoreductase (nfrA) from Staphylococcus aureus (strain bovine RF122 / ET3-1).